The sequence spans 563 residues: 4-hydroxy-7-methoxy-3-oxo-3,4-dihydro-2H-1,4-benzoxazin-2-yl glucoside beta-D-glucosidase 2, chloroplastic (563 aa).

Residues 1–51 (MAPLLAAAMNHAAHPVLRSHLGPNNESFSRHHLSSSPQSSKRRFNLSFTPR) constitute a chloroplast transit peptide. Residues 17 to 43 (LRSHLGPNNESFSRHHLSSSPQSSKRR) are disordered. Residues glutamine 89, histidine 193, and 241 to 242 (NE) contribute to the a beta-D-glucoside site. Catalysis depends on glutamate 242, which acts as the Proton donor. Cysteine 261 and cysteine 267 are disulfide-bonded. Positions 322–358 (SFLDEQAKERSMDINLGWFLEPVVRGDYPFSMRSLAR) are dimerization. A beta-D-glucoside is bound at residue tyrosine 384. Dimerization stretches follow at residues 391–402 (HIDISPKYSPVL) and 447–450 (KYGN). Residues glutamate 457, tryptophan 508, 515 to 516 (EW), and tyrosine 524 each bind a beta-D-glucoside. The active-site Nucleophile is glutamate 457.

Belongs to the glycosyl hydrolase 1 family. As to quaternary structure, homo- and heterodimer. As to expression, expressed in leaves only starting at day 6 after germination.

It localises to the plastid. The protein resides in the chloroplast. The enzyme catalyses Hydrolysis of terminal, non-reducing beta-D-glucosyl residues with release of beta-D-glucose.. It catalyses the reaction DIMBOA beta-D-glucoside + H2O = DIMBOA + D-glucose. It carries out the reaction DIBOA beta-D-glucoside + H2O = DIBOA + D-glucose. Functionally, beta-glucosidase acting poorly on artificial aryl beta-glucosides. Has no activity toward the chromogenic substrate 6-bromo-2-naphthyl-beta-D-glucoside (6BNGlc). In Zea mays (Maize), this protein is 4-hydroxy-7-methoxy-3-oxo-3,4-dihydro-2H-1,4-benzoxazin-2-yl glucoside beta-D-glucosidase 2, chloroplastic (GLU2).